Reading from the N-terminus, the 340-residue chain is Cysteinyl leukotriene receptor 1 (340 aa).

Over 1–31 the chain is Extracellular; it reads MDETGNPTIPPASNNTCYDSIDDFRNQVYST. Asn14 carries an N-linked (GlcNAc...) asparagine glycan. A helical membrane pass occupies residues 32 to 52; the sequence is LYSMISVVGFFGNGFVLYVLV. The Cytoplasmic segment spans residues 53–60; it reads KTYHEKSA. Residues 61 to 81 form a helical membrane-spanning segment; sequence FQVYMINLAVADLLCVCTLPL. The Extracellular portion of the chain corresponds to 82 to 109; that stretch reads RVAYYVHKGIWLFGDFLCRLSTYALYVN. Residues Cys99 and Cys176 are joined by a disulfide bond. Residues 110 to 130 traverse the membrane as a helical segment; that stretch reads LYCSIFFMTAMSFFRCVAIVF. The Cytoplasmic portion of the chain corresponds to 131–144; sequence PVQNISLVTQKKAR. Residues 145–165 form a helical membrane-spanning segment; that stretch reads LVCIAIWMFVILTSSPFLMAN. Residues 166–196 are Extracellular-facing; it reads TYKDEKNNTKCFEPPQDNQAKNYVLILHYVS. Asn172 carries N-linked (GlcNAc...) asparagine glycosylation. A helical transmembrane segment spans residues 197–217; it reads LFIGFIIPFITIIVCYTMIIF. At 218–233 the chain is on the cytoplasmic side; the sequence is TLLKSSMKKNLSSRKR. A helical membrane pass occupies residues 234 to 254; the sequence is AIGMIIVVTAAFLVSFMPYHI. Topologically, residues 255 to 279 are extracellular; it reads QRTIHLHFLHNKTKPCDSILRMQKS. Residue Asn265 is glycosylated (N-linked (GlcNAc...) asparagine). The chain crosses the membrane as a helical span at residues 280–300; that stretch reads VVITLSLAASNCCFDPLLYFF. Residues 301–340 lie on the Cytoplasmic side of the membrane; sequence SGGNFRRRLSTIRKYSLSSMTYIPKKKTSLPQKGKDICKE.

The protein belongs to the G-protein coupled receptor 1 family.

The protein resides in the cell membrane. In terms of biological role, receptor for cysteinyl leukotrienes mediating bronchoconstriction of individuals with and without asthma. Stimulation by LTD4 results in the contraction and proliferation of smooth muscle, edema, eosinophil migration and damage to the mucus layer in the lung. This response is mediated via a G-protein that activates a phosphatidylinositol-calcium second messenger system. This chain is Cysteinyl leukotriene receptor 1 (CYSLTR1), found in Cavia porcellus (Guinea pig).